The chain runs to 162 residues: Caveolin-2 (162 aa).

Residues 1–86 (MGLETEKADV…FEISKYVVYK (86 aa)) are Cytoplasmic-facing. At Tyr19 the chain carries Phosphotyrosine; by SRC. A phosphoserine mark is found at Ser20 and Ser23. Tyr27 carries the phosphotyrosine; by SRC modification. The residue at position 36 (Ser36) is a Phosphoserine. An intramembrane region (helical) is located at residues 87-107 (FLTVFLAIPLAFAAGILFATL). Residues 108 to 162 (SCLHIWIIMPFVKTCLMVLPSVQTVWKTVTDVVIAPLCASVGRSFSSVSLQLSHD) lie on the Cytoplasmic side of the membrane.

It belongs to the caveolin family. In terms of assembly, monomer or homodimer. Interacts with CAV1; the interaction forms a stable heterooligomeric complex that is required for targeting to lipid rafts and for caveolae formation. Tyrosine phosphorylated forms do not form heterooligomers with the Tyr-19-phosphorylated form existing as a monomer or dimer, and the Tyr-27-form as a monomer only. Interacts (tyrosine phosphorylated form) with the SH2 domain-containing proteins, RASA1, NCK1 and SRC. Interacts (tyrosine phosphorylated form) with INSR, the interaction (Tyr-27-phosphorylated form) is increased on insulin stimulation. Interacts (Tyr-19 phosphorylated form) with MAPK1 (phosphorylated form); the interaction, promoted by insulin, leads to nuclear location and MAPK1 activation. Interacts with STAT3; the interaction is increased on insulin-induced tyrosine phosphorylation leading to STAT activation. Phosphorylated on serine and tyrosine residues. CAV1 promotes phosphorylation on Ser-23 which then targets the complex to the plasma membrane, lipid rafts and caveolae. Phosphorylation on Ser-36 appears to modulate mitosis in endothelial cells. Phosphorylation on both Tyr-19 and Tyr-27 is required for insulin-induced 'Ser-727' phosphorylation of STAT3 and its activation. Phosphorylation on Tyr-19 is required for insulin-induced phosphorylation of MAPK1 and DNA binding of STAT3. Tyrosine phosphorylation is induced by both EGF and insulin (By. similarity).

It is found in the nucleus. Its subcellular location is the cytoplasm. The protein resides in the golgi apparatus membrane. The protein localises to the cell membrane. It localises to the membrane. It is found in the caveola. In terms of biological role, may act as a scaffolding protein within caveolar membranes. Interacts directly with G-protein alpha subunits and can functionally regulate their activity. Acts as an accessory protein in conjunction with CAV1 in targeting to lipid rafts and driving caveolae formation. The Ser-36 phosphorylated form has a role in modulating mitosis in endothelial cells. Positive regulator of cellular mitogenesis of the MAPK signaling pathway. Required for the insulin-stimulated nuclear translocation and activation of MAPK1 and STAT3, and the subsequent regulation of cell cycle progression. The sequence is that of Caveolin-2 (CAV2) from Loxodonta africana (African elephant).